Here is a 314-residue protein sequence, read N- to C-terminus: Tetraacyldisaccharide 4'-kinase (314 aa).

54-61 (YIGGTGKT) contacts ATP.

This sequence belongs to the LpxK family.

The enzyme catalyses a lipid A disaccharide + ATP = a lipid IVA + ADP + H(+). Its pathway is glycolipid biosynthesis; lipid IV(A) biosynthesis; lipid IV(A) from (3R)-3-hydroxytetradecanoyl-[acyl-carrier-protein] and UDP-N-acetyl-alpha-D-glucosamine: step 6/6. Transfers the gamma-phosphate of ATP to the 4'-position of a tetraacyldisaccharide 1-phosphate intermediate (termed DS-1-P) to form tetraacyldisaccharide 1,4'-bis-phosphate (lipid IVA). This is Tetraacyldisaccharide 4'-kinase from Pelagibacter ubique (strain HTCC1062).